Consider the following 286-residue polypeptide: Aminoglycoside N(3)-acetyltransferase III (286 aa).

Belongs to the antibiotic N-acetyltransferase family.

The enzyme catalyses a 2-deoxystreptamine antibiotic + acetyl-CoA = an N(3)-acetyl-2-deoxystreptamine antibiotic + CoA + H(+). Its function is as follows. Resistance to antibiotics containing the 2-deoxy-streptamine ring including gentamicin, kanamycin, tobramycin, neomycin and apramycin. This is Aminoglycoside N(3)-acetyltransferase III (aacC3) from Salmonella sp.